The chain runs to 260 residues: Coiled-coil domain-containing protein 127 (260 aa).

The stretch at 76-139 (AVISEHRRAV…EKSRLQPLRN (64 aa)) forms a coiled coil.

The sequence is that of Coiled-coil domain-containing protein 127 (Ccdc127) from Mus musculus (Mouse).